Reading from the N-terminus, the 201-residue chain is Anthranilate synthase component II (201 aa).

Residues 3–196 enclose the Glutamine amidotransferase type-1 domain; sequence DILLLDNIDS…LAWAQRKLEP (194 aa). 57–59 is a binding site for L-glutamine; it reads GPG. Catalysis depends on Cys-84, which acts as the Nucleophile; for GATase activity. Residues Gln-88 and 134–135 contribute to the L-glutamine site; that span reads SL. Active-site for GATase activity residues include His-170 and Glu-172.

As to quaternary structure, tetramer of two components I and two components II.

It carries out the reaction chorismate + L-glutamine = anthranilate + pyruvate + L-glutamate + H(+). The catalysed reaction is N-(5-phospho-beta-D-ribosyl)anthranilate + diphosphate = 5-phospho-alpha-D-ribose 1-diphosphate + anthranilate. Its pathway is amino-acid biosynthesis; L-tryptophan biosynthesis; L-tryptophan from chorismate: step 1/5. It participates in amino-acid biosynthesis; L-tryptophan biosynthesis; L-tryptophan from chorismate: step 2/5. In Shigella dysenteriae, this protein is Anthranilate synthase component II (trpG-TRPD).